A 694-amino-acid polypeptide reads, in one-letter code: Elongation factor G (694 aa).

The tr-type G domain maps to 8 to 287; the sequence is EDYRNFGIMA…AVVEFLPAPT (280 aa). Residues 17-24, 86-90, and 140-143 contribute to the GTP site; these read AHIDAGKT, DTPGH, and NKMD.

The protein belongs to the TRAFAC class translation factor GTPase superfamily. Classic translation factor GTPase family. EF-G/EF-2 subfamily.

It localises to the cytoplasm. Its function is as follows. Catalyzes the GTP-dependent ribosomal translocation step during translation elongation. During this step, the ribosome changes from the pre-translocational (PRE) to the post-translocational (POST) state as the newly formed A-site-bound peptidyl-tRNA and P-site-bound deacylated tRNA move to the P and E sites, respectively. Catalyzes the coordinated movement of the two tRNA molecules, the mRNA and conformational changes in the ribosome. The chain is Elongation factor G from Brucella ovis (strain ATCC 25840 / 63/290 / NCTC 10512).